The sequence spans 314 residues: Testis-specific Y-encoded protein 9 (314 aa).

It belongs to the nucleosome assembly protein (NAP) family.

It is found in the cytoplasm. The protein resides in the nucleus. In terms of biological role, may be involved in sperm differentiation and proliferation. The polypeptide is Testis-specific Y-encoded protein 9 (Homo sapiens (Human)).